We begin with the raw amino-acid sequence, 54 residues long: UPF0391 membrane protein Pfl01_0044 (54 aa).

A run of 2 helical transmembrane segments spans residues 4-24 (WAIT…GGIA) and 29-49 (GIAK…FFFG).

This sequence belongs to the UPF0391 family.

It localises to the cell membrane. The polypeptide is UPF0391 membrane protein Pfl01_0044 (Pseudomonas fluorescens (strain Pf0-1)).